Reading from the N-terminus, the 217-residue chain is External core antigen (217 aa).

The signal sequence occupies residues 1-20 (MYLFHLCLVFACVPCPTVQA). The HBEAG stretch occupies residues 26–28 (GWL). Positions 166-217 (APILSTLPEHTVIRRRGGSRAARSPRRRTPSPRRRRSQSPRRRRSQSPASNC) are disordered. Over residues 178–210 (IRRRGGSRAARSPRRRTPSPRRRRSQSPRRRRS) the composition is skewed to basic residues. One copy of the 1; half-length repeat lies at 189 to 195 (SPRRRTP). The interval 189–211 (SPRRRTPSPRRRRSQSPRRRRSQ) is 3 X 8 AA repeats of S-P-R-R-R-R-S-Q. A propeptide spanning residues 189-217 (SPRRRTPSPRRRRSQSPRRRRSQSPASNC) is cleaved from the precursor. Repeat copies occupy residues 196–203 (SPRRRRSQ) and 204–211 (SPRRRRSQ).

This sequence belongs to the orthohepadnavirus precore antigen family. As to quaternary structure, homodimerizes. Post-translationally, phosphorylated. In terms of processing, cleaved by host furin.

It is found in the secreted. It localises to the host nucleus. Its function is as follows. May regulate immune response to the intracellular capsid in acting as a T-cell tolerogen, by having an immunoregulatory effect which prevents destruction of infected cells by cytotoxic T-cells. This immune regulation may predispose to chronicity during perinatal infections and prevent severe liver injury during adult infections. The chain is External core antigen from Otospermophilus beecheyi (California ground squirrel).